Reading from the N-terminus, the 60-residue chain is UPF0434 protein Rfer_3156 (60 aa).

The protein belongs to the UPF0434 family.

This Albidiferax ferrireducens (strain ATCC BAA-621 / DSM 15236 / T118) (Rhodoferax ferrireducens) protein is UPF0434 protein Rfer_3156.